We begin with the raw amino-acid sequence, 201 residues long: Inner membrane protein YnbA (201 aa).

Over Met-1–Gly-43 the chain is Periplasmic. A helical membrane pass occupies residues Leu-44–Ile-64. At Arg-65–Arg-84 the chain is on the cytoplasmic side. The helical transmembrane segment at Leu-85 to Phe-107 threads the bilayer. The Periplasmic segment spans residues Leu-108–Val-116. The helical transmembrane segment at Ile-117–Val-139 threads the bilayer. At Arg-140–Arg-151 the chain is on the cytoplasmic side. Residues Ala-152–Asn-172 traverse the membrane as a helical segment. At Asn-173–Leu-175 the chain is on the periplasmic side. The helical transmembrane segment at Trp-176–Leu-196 threads the bilayer. At Met-197 to Ile-201 the chain is on the cytoplasmic side.

It localises to the cell inner membrane. The chain is Inner membrane protein YnbA (ynbA) from Escherichia coli (strain K12).